A 344-amino-acid chain; its full sequence is N-acetyl-gamma-glutamyl-phosphate reductase (344 aa).

Residue C150 is part of the active site.

It belongs to the NAGSA dehydrogenase family. Type 1 subfamily.

It is found in the cytoplasm. It carries out the reaction N-acetyl-L-glutamate 5-semialdehyde + phosphate + NADP(+) = N-acetyl-L-glutamyl 5-phosphate + NADPH + H(+). The protein operates within amino-acid biosynthesis; L-arginine biosynthesis; N(2)-acetyl-L-ornithine from L-glutamate: step 3/4. Its function is as follows. Catalyzes the NADPH-dependent reduction of N-acetyl-5-glutamyl phosphate to yield N-acetyl-L-glutamate 5-semialdehyde. This chain is N-acetyl-gamma-glutamyl-phosphate reductase, found in Pseudomonas aeruginosa (strain ATCC 15692 / DSM 22644 / CIP 104116 / JCM 14847 / LMG 12228 / 1C / PRS 101 / PAO1).